Consider the following 336-residue polypeptide: 4-hydroxy-3-methylbut-2-enyl diphosphate reductase (336 aa).

Residues 1–23 form a disordered region; that stretch reads MFGQRLDTLGAMSSSVSSPSPET. Residue Cys-36 coordinates [4Fe-4S] cluster. (2E)-4-hydroxy-3-methylbut-2-enyl diphosphate is bound by residues His-65 and His-98. Dimethylallyl diphosphate-binding residues include His-65 and His-98. Positions 65 and 98 each coordinate isopentenyl diphosphate. Cys-120 serves as a coordination point for [4Fe-4S] cluster. A (2E)-4-hydroxy-3-methylbut-2-enyl diphosphate-binding site is contributed by His-148. Residue His-148 participates in dimethylallyl diphosphate binding. His-148 contributes to the isopentenyl diphosphate binding site. The active-site Proton donor is the Glu-150. (2E)-4-hydroxy-3-methylbut-2-enyl diphosphate is bound at residue Thr-190. Cys-220 lines the [4Fe-4S] cluster pocket. Positions 248, 249, 250, and 293 each coordinate (2E)-4-hydroxy-3-methylbut-2-enyl diphosphate. Residues Ser-248, Ser-249, Asn-250, and Ser-293 each coordinate dimethylallyl diphosphate. Positions 248, 249, 250, and 293 each coordinate isopentenyl diphosphate.

It belongs to the IspH family. It depends on [4Fe-4S] cluster as a cofactor.

The enzyme catalyses isopentenyl diphosphate + 2 oxidized [2Fe-2S]-[ferredoxin] + H2O = (2E)-4-hydroxy-3-methylbut-2-enyl diphosphate + 2 reduced [2Fe-2S]-[ferredoxin] + 2 H(+). The catalysed reaction is dimethylallyl diphosphate + 2 oxidized [2Fe-2S]-[ferredoxin] + H2O = (2E)-4-hydroxy-3-methylbut-2-enyl diphosphate + 2 reduced [2Fe-2S]-[ferredoxin] + 2 H(+). Its pathway is isoprenoid biosynthesis; dimethylallyl diphosphate biosynthesis; dimethylallyl diphosphate from (2E)-4-hydroxy-3-methylbutenyl diphosphate: step 1/1. It participates in isoprenoid biosynthesis; isopentenyl diphosphate biosynthesis via DXP pathway; isopentenyl diphosphate from 1-deoxy-D-xylulose 5-phosphate: step 6/6. Its function is as follows. Catalyzes the conversion of 1-hydroxy-2-methyl-2-(E)-butenyl 4-diphosphate (HMBPP) into a mixture of isopentenyl diphosphate (IPP) and dimethylallyl diphosphate (DMAPP). Acts in the terminal step of the DOXP/MEP pathway for isoprenoid precursor biosynthesis. This Corynebacterium efficiens (strain DSM 44549 / YS-314 / AJ 12310 / JCM 11189 / NBRC 100395) protein is 4-hydroxy-3-methylbut-2-enyl diphosphate reductase.